We begin with the raw amino-acid sequence, 857 residues long: Cation/H(+) antiporter 25 (857 aa).

11 helical membrane-spanning segments follow: residues 65 to 85, 93 to 110, 122 to 142, 161 to 181, 194 to 214, 227 to 247, 259 to 279, 313 to 333, 385 to 405, 413 to 435, and 447 to 467; these read FSTF…VYVL, RIVC…SMLG, PIAN…FFFL, YIAA…GAAL, SIGG…YTVL, FAMS…VLFE, YSVI…LLVV, FLTD…GLVV, IYMS…AALF, SLTL…LHWI, and VMVL…SFLY. At Ser855 the chain carries Phosphoserine.

Belongs to the monovalent cation:proton antiporter 2 (CPA2) transporter (TC 2.A.37) family. CHX (TC 2.A.37.4) subfamily. Specifically expressed in pollen.

Its subcellular location is the membrane. Its function is as follows. May operate as a cation/H(+) antiporter. This chain is Cation/H(+) antiporter 25 (CHX25), found in Arabidopsis thaliana (Mouse-ear cress).